The sequence spans 524 residues: Keratin, type II cytoskeletal 72 (524 aa).

Positions 1-136 are head; it reads MSRQLNLYPG…DPEIQKVRAQ (136 aa). The segment at 137 to 172 is coil 1A; sequence EREQIKALNNKFASFIDKVRFLEQQNQVLGTKWELL. An IF rod domain is found at 137–450; it reads EREQIKALNN…KLLEGEECRM (314 aa). The interval 173-191 is linker 1; that stretch reads QQLDLNNCKNNLEPILEGY. A coil 1B region spans residues 192–283; it reads TSNLRKQLEM…CLYEGEIAQL (92 aa). Residues 284–307 are linker 12; the sequence is QSHISDTSVILSMDNNRDLDLDSI. Positions 308–446 are coil 2; sequence IAQVRAQYEE…ATYRKLLEGE (139 aa). Residues 447–524 are tail; that stretch reads ECRMSGEYPN…SSCATKKASR (78 aa). Residues 495–524 are disordered; sequence KTKGSCGGSELKDAPAKTSGSSCATKKASR.

Belongs to the intermediate filament family. Heterotetramer of two type I and two type II keratins.

Functionally, has a role in hair formation. Specific component of keratin intermediate filaments in the inner root sheath (IRS) of the hair follicle. This Bos taurus (Bovine) protein is Keratin, type II cytoskeletal 72 (KRT72).